Reading from the N-terminus, the 183-residue chain is Ribosome rescue factor SmrB (183 aa).

The region spanning 98–173 is the Smr domain; the sequence is LDLHGLTQLQ…GDAALLVLIE (76 aa).

The protein belongs to the SmrB family. In terms of assembly, associates with collided ribosomes, but not with correctly translating polysomes.

Functionally, acts as a ribosome collision sensor. Detects stalled/collided disomes (pairs of ribosomes where the leading ribosome is stalled and a second ribosome has collided with it) and endonucleolytically cleaves mRNA at the 5' boundary of the stalled ribosome. Stalled/collided disomes form a new interface (primarily via the 30S subunits) that binds SmrB. Cleaved mRNA becomes available for tmRNA ligation, leading to ribosomal subunit dissociation and rescue of stalled ribosomes. In Salmonella arizonae (strain ATCC BAA-731 / CDC346-86 / RSK2980), this protein is Ribosome rescue factor SmrB.